Reading from the N-terminus, the 367-residue chain is Phosphoribosylaminoimidazole-succinocarboxamide synthase (367 aa).

It belongs to the SAICAR synthetase family.

The catalysed reaction is 5-amino-1-(5-phospho-D-ribosyl)imidazole-4-carboxylate + L-aspartate + ATP = (2S)-2-[5-amino-1-(5-phospho-beta-D-ribosyl)imidazole-4-carboxamido]succinate + ADP + phosphate + 2 H(+). It participates in purine metabolism; IMP biosynthesis via de novo pathway; 5-amino-1-(5-phospho-D-ribosyl)imidazole-4-carboxamide from 5-amino-1-(5-phospho-D-ribosyl)imidazole-4-carboxylate: step 1/2. This chain is Phosphoribosylaminoimidazole-succinocarboxamide synthase, found in Aliivibrio salmonicida (strain LFI1238) (Vibrio salmonicida (strain LFI1238)).